The chain runs to 299 residues: Coenzyme PQQ synthesis protein B (299 aa).

Belongs to the PqqB family.

Its pathway is cofactor biosynthesis; pyrroloquinoline quinone biosynthesis. May be involved in the transport of PQQ or its precursor to the periplasm. The chain is Coenzyme PQQ synthesis protein B from Methylorubrum populi (strain ATCC BAA-705 / NCIMB 13946 / BJ001) (Methylobacterium populi).